The sequence spans 91 residues: RING finger protein Z (91 aa).

The N-myristoyl glycine; by host moiety is linked to residue Gly-2. The RING-type; atypical zinc finger occupies 35–71 (CKCCWFQDKNLVECSDHYLCLKCISSMLKRGKNCEIC). Residues 85–88 (PTAP) carry the PTAP/PSAP motif motif.

This sequence belongs to the arenaviridae Z protein family. As to quaternary structure, interacts with protein NP; this interaction probably directs the encapsidated genome to budding sites. Interacts (via RING domain) with polymerase L; this interaction inhibits viral transcription and replication, Z partially blocks the product exit tunnel for the releasing nascent RNA product. Interacts with the glycoprotein complex; this interaction plays a role in virion budding. Interacts with host eIF4E; this interaction results in eIF4E reduced affinity for its substrate, the 5'-m7 G cap structure. Interacts (via late-budding domain) with host TSG101; this interaction is essential for budding and release of viral particles. Interacts with host RPLP0; this interaction may serve to load ribosome-like particles inside the virion. Interacts with host PML; this interaction induces PML bodies redistribution in the cytoplasm upon viral infection. Post-translationally, myristoylation is required for the role of RING finger protein Z in assembly and budding.

Its subcellular location is the virion. The protein localises to the host cytoplasm. The protein resides in the host perinuclear region. It localises to the host cell membrane. In terms of biological role, plays a crucial role in virion assembly and budding. Expressed late in the virus life cycle, it acts as an inhibitor of viral transcription and RNA synthesis by interacting with the viral polymerase L. Presumably recruits the NP encapsidated genome to cellular membranes at budding sites via direct interaction with NP. Plays critical roles in the final steps of viral release by interacting with host TSG101, a member of the vacuolar protein-sorting pathway and using other cellular host proteins involved in vesicle formation pathway. The budding of the virus progeny occurs after association of protein Z with the viral glycoprotein complex SSP-GP1-GP2 at the cell periphery, step that requires myristoylation of protein Z. Also selectively represses protein production by associating with host eIF4E. In cell-based minigenome assay, has an inhibitory effect on the ribonucleoprotein machinery (vRNP), which is responsible for the replication and transcription of the viral genome. This chain is RING finger protein Z, found in Latino mammarenavirus (isolate Rat/Bolivia/MARU 1924/1965) (LATV).